The chain runs to 891 residues: Extended synaptotagmin-3 (891 aa).

Positions 1-30 (MQPEEPCAPSAPGGPDVPERGQRSRDPGPR) are disordered. The Cytoplasmic segment spans residues 1-32 (MQPEEPCAPSAPGGPDVPERGQRSRDPGPRLS). Residues 17 to 28 (VPERGQRSRDPG) are compositionally biased toward basic and acidic residues. The helical transmembrane segment at 33–53 (GQLLPELYSFVARVLFYLAPV) threads the bilayer. A topological domain (lumenal) is located at residue Tyr-54. The helical transmembrane segment at 55 to 75 (LAGYLGLSVTWLLLGALLWMW) threads the bilayer. The Cytoplasmic portion of the chain corresponds to 76 to 891 (WRRNRRGKLG…ELTADGQPRS (816 aa)). Positions 118–295 (DVERVEWANK…LPNRVTVPVK (178 aa)) constitute an SMP-LTD domain. 2 C2 domains span residues 292–412 (VPVK…DEWF) and 430–570 (SLLT…QLDH). Ca(2+) is bound by residues Lys-325, Asp-326, Asp-336, Asp-383, Glu-384, Asp-385, Asp-387, Asp-389, and Asp-390. A disordered region spans residues 652-711 (SAATTDPEPMPEPQGPGPEPKGKDSARGLCESPGKKKNPATTFLTVPGLHSPGPIKSPRP). Pro residues predominate over residues 659 to 670 (EPMPEPQGPGPE). The C2 3 domain occupies 759 to 881 (RLGEIQLTVR…DLIKGFSQWY (123 aa)). Residues 806 to 813 (RRWASRKK) are required for phosphatidylinositol 4,5-bisphosphate-dependent location at the cell membrane.

Belongs to the extended synaptotagmin family.

It is found in the cell membrane. Its subcellular location is the endoplasmic reticulum membrane. Its function is as follows. Tethers the endoplasmic reticulum to the cell membrane and promotes the formation of appositions between the endoplasmic reticulum and the cell membrane. Binds glycerophospholipids in a barrel-like domain and may play a role in cellular lipid transport. The chain is Extended synaptotagmin-3 (Esyt3) from Mus musculus (Mouse).